Reading from the N-terminus, the 467-residue chain is Coiled-coil domain-containing protein 174 (467 aa).

Disordered stretches follow at residues 47 to 76 (INKK…LEEQ) and 129 to 163 (GATR…SEEW). Basic and acidic residues predominate over residues 64 to 76 (RAEKDAEQKLEEQ). Residues 64–99 (RAEKDAEQKLEEQKTLDKAREKLEEKAKLYEKMTKG) adopt a coiled-coil conformation. Acidic residues predominate over residues 136–147 (IEEERDDDDKEE). Residue Ser198 is modified to Phosphoserine. A coiled-coil region spans residues 268–310 (LEMLREQTTDQRIKRENIKEKRKAMLEARLAKLRQKKMKKSKE). Disordered regions lie at residues 301–365 (RQKK…IREW) and 379–454 (KQSE…VTFQ). Basic and acidic residues-rich tracts occupy residues 349–365 (IQER…IREW) and 379–390 (KQSELRAERDPE). Polar residues predominate over residues 406-415 (PMSSQPQSRP). Low complexity predominate over residues 423–446 (GHSSGQSQEPSSSHTSTPASESSP).

It localises to the nucleus. In terms of biological role, probably involved in neuronal development. This is Coiled-coil domain-containing protein 174 (Ccdc174) from Mus musculus (Mouse).